The following is a 181-amino-acid chain: MKASISIDEKKDFIRWFLNKHQMKTREAMWVLNYIAGHDQIVKYVHFVDNLEGCARGLSLSAHGVESEPFLFFKGNIMTTDPEKAFHDIRLNWDEELYVELHFEEAMSSPEYALVREDNPFAAVKLADEEKEMADALIYQSVHQFSREKVLQQIDEALDTRDEAAFHKLVRILQQMDTEKE.

This sequence belongs to the UPF0302 family.

The polypeptide is UPF0302 protein lmo1921 (Listeria monocytogenes serovar 1/2a (strain ATCC BAA-679 / EGD-e)).